We begin with the raw amino-acid sequence, 166 residues long: Nicotine metabolites export pump subunit NepB (166 aa).

4 helical membrane passes run 51–71 (LHAW…TVIL), 77–97 (FQLP…FFLL), 108–128 (VAYA…GAII), and 133–153 (VTLG…ILNL).

It belongs to the drug/metabolite transporter (DMT) superfamily. Small multidrug resistance (SMR) (TC 2.A.7.1) family. NepA/NepB subfamily. The efflux pump is composed of NepA and NepB.

Its subcellular location is the cell membrane. In terms of biological role, component of an efflux pump responsible for the transport of nicotine breakdown products, in particular methylamine, out of the cell. This pump apparently serves as a metabolic valve for nicotine catabolites and may protect the bacteria from the potentially toxic side effects of these compounds. In Paenarthrobacter nicotinovorans (Arthrobacter nicotinovorans), this protein is Nicotine metabolites export pump subunit NepB (nepB).